Reading from the N-terminus, the 379-residue chain is Forkhead box protein F1 (379 aa).

Residues M1 to R45 form a disordered region. The span at H12 to A24 shows a compositional bias: gly residues. The fork-head DNA-binding region spans E47–R138.

Expressed in lung and placenta.

Its subcellular location is the nucleus. In terms of biological role, probable transcription activator for a number of lung-specific genes. This chain is Forkhead box protein F1 (FOXF1), found in Homo sapiens (Human).